A 349-amino-acid polypeptide reads, in one-letter code: Large ribosomal subunit protein uL2mz, N-terminal part (349 aa).

The protein belongs to the universal ribosomal protein uL2 family. Component of the mitochondrial ribosome large subunit.

The protein resides in the mitochondrion. This Arabidopsis thaliana (Mouse-ear cress) protein is Large ribosomal subunit protein uL2mz, N-terminal part.